The primary structure comprises 281 residues: Bifunctional protein FolD (281 aa).

NADP(+) is bound by residues 165 to 167 (GRG), T192, and V233.

This sequence belongs to the tetrahydrofolate dehydrogenase/cyclohydrolase family. As to quaternary structure, homodimer.

The catalysed reaction is (6R)-5,10-methylene-5,6,7,8-tetrahydrofolate + NADP(+) = (6R)-5,10-methenyltetrahydrofolate + NADPH. It catalyses the reaction (6R)-5,10-methenyltetrahydrofolate + H2O = (6R)-10-formyltetrahydrofolate + H(+). It functions in the pathway one-carbon metabolism; tetrahydrofolate interconversion. Functionally, catalyzes the oxidation of 5,10-methylenetetrahydrofolate to 5,10-methenyltetrahydrofolate and then the hydrolysis of 5,10-methenyltetrahydrofolate to 10-formyltetrahydrofolate. This Corynebacterium diphtheriae (strain ATCC 700971 / NCTC 13129 / Biotype gravis) protein is Bifunctional protein FolD.